Consider the following 597-residue polypeptide: Putative lipase ATG15 (597 aa).

At 1–15 (MTLEKNRHANKGTSW) the chain is on the cytoplasmic side. The helical; Signal-anchor for type II membrane protein transmembrane segment at 16-36 (TWMIYKFVVGVITVAILVLFI) threads the bilayer. Residues 37-597 (TQKSVSQAQD…DDDEDTFERK (561 aa)) are Lumenal-facing. 3 N-linked (GlcNAc...) asparagine glycosylation sites follow: Asn195, Asn262, and Asn346. The active-site Charge relay system is the Ser364. A glycan (N-linked (GlcNAc...) asparagine) is linked at Asn481. The tract at residues 507–570 (EKDEPKLPNP…PTDQDPPKKC (64 aa)) is disordered. Positions 519–554 (SSSKSTLSTKTTSLKSSSTYSGSTSSSTVTKTTQTS) are enriched in low complexity.

This sequence belongs to the AB hydrolase superfamily. Lipase family. As to quaternary structure, binds to both phosphatidylinositol (PI) and phosphatidylinositol 3,5-bisphosphate (PIP2).

The protein localises to the endosome. The protein resides in the multivesicular body membrane. Its subcellular location is the prevacuolar compartment membrane. The catalysed reaction is a triacylglycerol + H2O = a diacylglycerol + a fatty acid + H(+). In terms of biological role, lipase which is essential for lysis of subvacuolar cytoplasm to vacuole targeted bodies and intravacuolar autophagic bodies. Involved in the lysis of intravacuolar multivesicular body (MVB) vesicles. The intravacuolar membrane disintegration by ATG15 is critical to life span extension. This is Putative lipase ATG15 (ATG15) from Candida albicans (strain SC5314 / ATCC MYA-2876) (Yeast).